A 420-amino-acid chain; its full sequence is Cyclin-B2-1 (420 aa).

The disordered stretch occupies residues 1–61; that stretch reads MDRASENRRL…EKSGKEEQKP (61 aa). The segment covering 49-60 has biased composition (basic and acidic residues); sequence PMLEKSGKEEQK.

This sequence belongs to the cyclin family. Cyclin AB subfamily. Interacts with CDKB2-1. As to expression, expressed in the root apices.

Involved in the control of the cell cycle at the G2/M (mitosis) transition. May activate CDKB2-1 kinase. This Oryza sativa subsp. japonica (Rice) protein is Cyclin-B2-1 (CYCB2-1).